Reading from the N-terminus, the 143-residue chain is Large ribosomal subunit protein uL11 (143 aa).

It belongs to the universal ribosomal protein uL11 family. Part of the ribosomal stalk of the 50S ribosomal subunit. Interacts with L10 and the large rRNA to form the base of the stalk. L10 forms an elongated spine to which L12 dimers bind in a sequential fashion forming a multimeric L10(L12)X complex. In terms of processing, one or more lysine residues are methylated.

Forms part of the ribosomal stalk which helps the ribosome interact with GTP-bound translation factors. The protein is Large ribosomal subunit protein uL11 of Bifidobacterium longum subsp. infantis (strain ATCC 15697 / DSM 20088 / JCM 1222 / NCTC 11817 / S12).